The primary structure comprises 372 residues: Ca(2+)/H(+) antiporter (372 aa).

11 helical membrane passes run 7-27, 29-49, 62-82, 94-114, 134-154, 162-182, 222-242, 251-271, 294-314, 320-340, and 352-372; these read IFLVLLVFCPLSFAAHWLGWG, TTVFILAGLAIVPLAAFMGTA, GGLLNATFGNATELILAYIAL, LTGSIIGNLLLVMGFAVFLGG, MNLGVVAILLPTALQYTSTGV, LSVAVAVVLIGVYLLSLVFSM, LWTGVLLVVTLGVAVESELLV, SLGLTALFTGVIVLPIIGNAA, GSSLQIAFFVAPVLVIVGWAI, LNFNPFELVAVLVAVLIVNSI, and ILLLATYAIVALAFFFHPTLV.

This sequence belongs to the Ca(2+):cation antiporter (CaCA) (TC 2.A.19) family. Cation/proton exchanger (CAX) subfamily.

The protein resides in the cell inner membrane. Ca(+)/H(+) antiporter that extrudes calcium in exchange for external protons. Plays an important role in salt tolerance. Does not transport sodium or lithium. This chain is Ca(2+)/H(+) antiporter, found in Synechocystis sp. (strain ATCC 27184 / PCC 6803 / Kazusa).